Reading from the N-terminus, the 522-residue chain is 2-isopropylmalate synthase (522 aa).

The region spanning 5–267 (VIIFDTTLRD…ETGINAKEIH (263 aa)) is the Pyruvate carboxyltransferase domain. Residues D14, H202, H204, and N238 each coordinate Mn(2+). The interval 392–522 (QLQQLVVQSD…MHKNRELGGV (131 aa)) is regulatory domain.

Belongs to the alpha-IPM synthase/homocitrate synthase family. LeuA type 1 subfamily. As to quaternary structure, homodimer. Mn(2+) serves as cofactor.

Its subcellular location is the cytoplasm. The catalysed reaction is 3-methyl-2-oxobutanoate + acetyl-CoA + H2O = (2S)-2-isopropylmalate + CoA + H(+). It participates in amino-acid biosynthesis; L-leucine biosynthesis; L-leucine from 3-methyl-2-oxobutanoate: step 1/4. Catalyzes the condensation of the acetyl group of acetyl-CoA with 3-methyl-2-oxobutanoate (2-ketoisovalerate) to form 3-carboxy-3-hydroxy-4-methylpentanoate (2-isopropylmalate). This is 2-isopropylmalate synthase from Shewanella sp. (strain MR-7).